A 908-amino-acid chain; its full sequence is UPF0182 protein NT01CX_0852 (908 aa).

The next 7 helical transmembrane spans lie at 8–28 (IGLF…VNVI), 47–67 (FTSV…AIKT), 96–116 (IINA…SLGY), 157–177 (LLSL…FLNI), 209–229 (LAIL…IKAW), 253–273 (FYIA…FSIL), and 280–300 (IISC…VSGA).

Belongs to the UPF0182 family.

It localises to the cell membrane. This Clostridium novyi (strain NT) protein is UPF0182 protein NT01CX_0852.